A 121-amino-acid polypeptide reads, in one-letter code: Large ribosomal subunit protein uL18 (121 aa).

It belongs to the universal ribosomal protein uL18 family. As to quaternary structure, part of the 50S ribosomal subunit; part of the 5S rRNA/L5/L18/L25 subcomplex. Contacts the 5S and 23S rRNAs.

In terms of biological role, this is one of the proteins that bind and probably mediate the attachment of the 5S RNA into the large ribosomal subunit, where it forms part of the central protuberance. This is Large ribosomal subunit protein uL18 from Bdellovibrio bacteriovorus (strain ATCC 15356 / DSM 50701 / NCIMB 9529 / HD100).